A 440-amino-acid chain; its full sequence is 2-phosphinomethylmalate synthase (440 aa).

Residues 39–313 (VWLSETTHRD…GARVNLPAVN (275 aa)) enclose the Pyruvate carboxyltransferase domain.

The protein belongs to the alpha-IPM synthase/homocitrate synthase family. Homodimer. Mn(2+) serves as cofactor. The cofactor is Co(2+).

The catalysed reaction is 3-(hydrohydroxyphosphoryl)pyruvate + acetyl-CoA + H2O = phosphinomethylmalate + CoA + H(+). Its pathway is secondary metabolite biosynthesis; bialaphos biosynthesis. Its activity is regulated as follows. Strongly inhibited by p-chloromercuribenzoate (pCMB), iodoacetamide (IA) and EDTA. In terms of biological role, involved in the biosynthesis of phosphinothricin tripeptide (PTT), also known as bialaphos (BA), a natural-product antibiotic and potent herbicide. Catalyzes the condensation berween phosphinopyruvic acid (PPA), an analog of oxalacetic acid, and acetyl-CoA to form R-2-phosphinomethylmalic acid (PMM). Can also act on oxaloacetate, but shows no activity when acetyl-CoA is substituted by propionyl-CoA or butyryl-CoA. The polypeptide is 2-phosphinomethylmalate synthase (Streptomyces hygroscopicus).